The following is an 861-amino-acid chain: Putative glutamate--cysteine ligase 2-2 (861 aa).

The tract at residues 1–372 (MSDARIVAVG…RDVPPAGAAA (372 aa)) is carboxylate-amine ligase. The tract at residues 373 to 861 (ALGSAPAVSA…GSKDTWIPRR (489 aa)) is unknown.

In the N-terminal section; belongs to the glutamate--cysteine ligase type 2 family. YbdK subfamily.

The catalysed reaction is L-cysteine + L-glutamate + ATP = gamma-L-glutamyl-L-cysteine + ADP + phosphate + H(+). Its function is as follows. ATP-dependent carboxylate-amine ligase which exhibits weak glutamate--cysteine ligase activity. This is Putative glutamate--cysteine ligase 2-2 from Frankia casuarinae (strain DSM 45818 / CECT 9043 / HFP020203 / CcI3).